The primary structure comprises 244 residues: Sepiapterin reductase (244 aa).

Residues 9–15, 40–42, 66–67, and Asn93 contribute to the NADP(+) site; these read GAGKGIG, SRT, and DI. Phe99 is a substrate binding site. An NADP(+)-binding site is contributed by Thr116. Residues Ser145 and Tyr158 each coordinate substrate. Residues Tyr158, Lys162, and 191-196 each bind NADP(+); that span reads VYTPMW. Trp196 contributes to the substrate binding site.

The protein belongs to the short-chain dehydrogenases/reductases (SDR) family. In terms of assembly, homodimer.

It is found in the cytoplasm. It carries out the reaction L-threo-7,8-dihydrobiopterin + NADP(+) = L-sepiapterin + NADPH + H(+). It catalyses the reaction L-threo-tetrahydrobiopterin + 2 NADP(+) = 6-pyruvoyl-5,6,7,8-tetrahydropterin + 2 NADPH + 2 H(+). Slightly inhibited by N-acetyldopamine but not by N-acetylserotonin or melatonin. Its function is as follows. Catalyzes the final reductions in tetra-hydrobiopterin biosynthesis to form 5,6,7,8-tetrahydrobiopterin. This chain is Sepiapterin reductase, found in Chlorobaculum tepidum (strain ATCC 49652 / DSM 12025 / NBRC 103806 / TLS) (Chlorobium tepidum).